The sequence spans 89 residues: MSRQVFCRKYQKEMEGLDFAPFPGAKGQEFFENVSKQAWQEWLQHQTTLINEKRLNVFEPEAKKFLEEQREKFFNNDESVEKAEGWKPE.

The protein belongs to the Fe(2+)-trafficking protein family.

Could be a mediator in iron transactions between iron acquisition and iron-requiring processes, such as synthesis and/or repair of Fe-S clusters in biosynthetic enzymes. The polypeptide is Probable Fe(2+)-trafficking protein (Acinetobacter baumannii (strain AB0057)).